The chain runs to 82 residues: Host transcription reprogramming factor 10 (82 aa).

The signal sequence occupies residues 1-19 (MQIFNMVSLVALFALGATA). The C2H2-type zinc-finger motif lies at 57–81 (WVCHACNKQFTTPAALQKHKDTVVH).

It localises to the secreted. Its subcellular location is the host nucleus. Probable secreted effector that translocates into the nuclei of host cells to reprogram the expression of targeted genes by binding on effector binding elements in rice. This chain is Host transcription reprogramming factor 10, found in Pyricularia oryzae (strain 70-15 / ATCC MYA-4617 / FGSC 8958) (Rice blast fungus).